The chain runs to 453 residues: Bifunctional protein GlmU (453 aa).

Residues 1–227 (MTQLSVVILA…LMEVEGANNR (227 aa)) are pyrophosphorylase. Residues 9 to 12 (LAAG), lysine 23, glutamine 74, 79 to 80 (GT), 101 to 103 (YGD), glycine 138, glutamate 152, asparagine 167, and asparagine 225 each bind UDP-N-acetyl-alpha-D-glucosamine. Aspartate 103 provides a ligand contact to Mg(2+). Asparagine 225 contributes to the Mg(2+) binding site. The tract at residues 228-248 (LQLAALERYYQKIQAEKLLLA) is linker. The segment at 249 to 453 (GVTIIDPARF…IQGWQRPTKK (205 aa)) is N-acetyltransferase. Positions 331 and 349 each coordinate UDP-N-acetyl-alpha-D-glucosamine. The active-site Proton acceptor is histidine 361. UDP-N-acetyl-alpha-D-glucosamine is bound by residues tyrosine 364 and asparagine 375. Acetyl-CoA-binding positions include alanine 378, 384-385 (NY), serine 403, alanine 421, and arginine 438.

In the N-terminal section; belongs to the N-acetylglucosamine-1-phosphate uridyltransferase family. The protein in the C-terminal section; belongs to the transferase hexapeptide repeat family. In terms of assembly, homotrimer. The cofactor is Mg(2+).

Its subcellular location is the cytoplasm. The enzyme catalyses alpha-D-glucosamine 1-phosphate + acetyl-CoA = N-acetyl-alpha-D-glucosamine 1-phosphate + CoA + H(+). It carries out the reaction N-acetyl-alpha-D-glucosamine 1-phosphate + UTP + H(+) = UDP-N-acetyl-alpha-D-glucosamine + diphosphate. It functions in the pathway nucleotide-sugar biosynthesis; UDP-N-acetyl-alpha-D-glucosamine biosynthesis; N-acetyl-alpha-D-glucosamine 1-phosphate from alpha-D-glucosamine 6-phosphate (route II): step 2/2. It participates in nucleotide-sugar biosynthesis; UDP-N-acetyl-alpha-D-glucosamine biosynthesis; UDP-N-acetyl-alpha-D-glucosamine from N-acetyl-alpha-D-glucosamine 1-phosphate: step 1/1. Its pathway is bacterial outer membrane biogenesis; LPS lipid A biosynthesis. Its function is as follows. Catalyzes the last two sequential reactions in the de novo biosynthetic pathway for UDP-N-acetylglucosamine (UDP-GlcNAc). The C-terminal domain catalyzes the transfer of acetyl group from acetyl coenzyme A to glucosamine-1-phosphate (GlcN-1-P) to produce N-acetylglucosamine-1-phosphate (GlcNAc-1-P), which is converted into UDP-GlcNAc by the transfer of uridine 5-monophosphate (from uridine 5-triphosphate), a reaction catalyzed by the N-terminal domain. The polypeptide is Bifunctional protein GlmU (Glaesserella parasuis serovar 5 (strain SH0165) (Haemophilus parasuis)).